The following is a 402-amino-acid chain: Sex hormone-binding globulin (402 aa).

The first 29 residues, 1 to 29, serve as a signal peptide directing secretion; the sequence is MESRGPLATSRLLLLLLLLLLRHTRQGWA. Thr36 carries an O-linked (GalNAc...) threonine glycan. 2 Laminin G-like domains span residues 45-217 and 224-390; these read VHLS…LRSC and GIFL…THSC. Cystine bridges form between Cys193-Cys217 and Cys362-Cys390. 2 N-linked (GlcNAc...) asparagine glycosylation sites follow: Asn380 and Asn396.

In terms of assembly, homodimer. Post-translationally, variant Asn-356 contains one N-linked (GlcNAc...) at position 356. Isoform 1 and isoform 2 are present in liver and testis.

Its subcellular location is the secreted. In terms of biological role, functions as an androgen transport protein, but may also be involved in receptor mediated processes. Each dimer binds one molecule of steroid. Specific for 5-alpha-dihydrotestosterone, testosterone, and 17-beta-estradiol. Regulates the plasma metabolic clearance rate of steroid hormones by controlling their plasma concentration. The protein is Sex hormone-binding globulin of Homo sapiens (Human).